A 213-amino-acid chain; its full sequence is Ras-related protein Rab-25 (213 aa).

GTP is bound by residues S21, G24, K25, T26, N27, S38, H39, T43, and T44. Position 26 (T26) interacts with Mg(2+). 2 short sequence motifs (switch) span residues N35–F49 and D67–G84. Positions 44 and 67 each coordinate Mg(2+). Residues G70, N125, K126, D128, A156, and L157 each coordinate GTP. S-geranylgeranyl cysteine attachment occurs at residues C209 and C210. The residue at position 210 (C210) is a Cysteine methyl ester. Positions I211–L213 are cleaved as a propeptide — removed in mature form.

Belongs to the small GTPase superfamily. Rab family. Interacts (GTP-bound form) with RAB11FIP1, RAB11FIP2, RAB11FIP3 and RAB11FIP4. Interacts (via the hypervariable C-terminal region) with ITGB1 (via the cytoplasmic region); the interaction is GTP-dependent. Interacts with ITGAV. Associates with the integrin alpha-V/beta-1 heterodimer. Interacts with VPS33B. Requires Mg(2+) as cofactor. Expression is restricted to epithelial cells. Expressed in the gastrointestinal mucosa, (highest expression seen in the ileum and colon), kidney, and lung. A very minor and variable level of expression is seen in the splenic tissue.

The protein resides in the cell membrane. It is found in the cell projection. The protein localises to the pseudopodium membrane. It localises to the cytoplasmic vesicle. It carries out the reaction GTP + H2O = GDP + phosphate + H(+). Regulated by guanine nucleotide exchange factors (GEFs) which promote the exchange of bound GDP for free GTP. Regulated by GTPase activating proteins (GAPs) which increase the GTP hydrolysis activity. Inhibited by GDP dissociation inhibitors (GDIs) which prevent Rab-GDP dissociation. The small GTPases Rab are key regulators of intracellular membrane trafficking, from the formation of transport vesicles to their fusion with membranes. Rabs cycle between an inactive GDP-bound form and an active GTP-bound form that is able to recruit to membranes different set of downstream effectors directly responsible for vesicle formation, movement, tethering and fusion. RAB25 regulates epithelial cell differentiation, proliferation and survival, thereby playing key roles in tumorigenesis. Promotes invasive migration of cells in which it functions to localize and maintain integrin alpha-V/beta-1 at the tips of extending pseudopodia. Involved in the regulation of epithelial morphogenesis through the control of CLDN4 expression and localization at tight junctions. May selectively regulate the apical recycling pathway. Together with MYO5B regulates transcytosis. In Oryctolagus cuniculus (Rabbit), this protein is Ras-related protein Rab-25 (RAB25).